Consider the following 60-residue polypeptide: Large ribosomal subunit protein bL32 (60 aa).

Positions 1 to 60 are disordered; that stretch reads MAVQQNKKSPSKRGMHRSHDFLVNPPTAIEPTTGESHLRHHISPNGFYRGRKILKTKADE. Basic residues predominate over residues 49 to 60; that stretch reads RGRKILKTKADE.

The protein belongs to the bacterial ribosomal protein bL32 family.

The chain is Large ribosomal subunit protein bL32 from Bordetella avium (strain 197N).